The following is a 268-amino-acid chain: Interleukin-1 alpha (268 aa).

A propeptide spanning residues 1 to 112 is cleaved from the precursor; that stretch reads MAKVPDLFED…DTEEEIIKPR (112 aa). K82 is modified (N6-acetyllysine). The nuclear localization signal (NLS) stretch occupies residues 82-86; it reads KKRRL. S87 carries the phosphoserine modification. N-linked (GlcNAc...) asparagine glycosylation is found at N102 and N141.

This sequence belongs to the IL-1 family. Monomer. Interacts with TMED10; the interaction mediates the translocation from the cytoplasm into the ERGIC (endoplasmic reticulum-Golgi intermediate compartment) and thereby secretion. Interacts with IL1R1. Interacts with S100A13; this interaction is the first step in the export of IL1A, followed by direct translocation of this complex across the plasma membrane. Acetylated within its nuclear localization sequence, which impacts subcellular localization. In terms of processing, proteolytic processed by CAPN1 in a calcium-dependent manner. Cleavage from 31 kDa precursor to 18 kDa biologically active molecules. Post-translationally, phosphorylated. Phosphorylation greatly enhances susceptibility to digestion and promotes the conversion of pre-IL1A alpha to the biologically active IL1A.

It localises to the nucleus. Its subcellular location is the cytoplasm. It is found in the secreted. Cytokine constitutively present intracellularly in nearly all resting non-hematopoietic cells that plays an important role in inflammation and bridges the innate and adaptive immune systems. After binding to its receptor IL1R1 together with its accessory protein IL1RAP, forms the high affinity interleukin-1 receptor complex. Signaling involves the recruitment of adapter molecules such as MYD88, IRAK1 or IRAK4. In turn, mediates the activation of NF-kappa-B and the three MAPK pathways p38, p42/p44 and JNK pathways. Within the cell, acts as an alarmin and cell death results in its liberation in the extracellular space after disruption of the cell membrane to induce inflammation and alert the host to injury or damage. In addition to its role as a danger signal, which occurs when the cytokine is passively released by cell necrosis, directly senses DNA damage and acts as signal for genotoxic stress without loss of cell integrity. The protein is Interleukin-1 alpha (IL1A) of Lama glama (Llama).